The chain runs to 160 residues: Large ribosomal subunit protein eL21B (160 aa).

Residues 114–140 form a disordered region; it reads AKRKEAKAQGKTVQLRRQPAPPATAHF.

It belongs to the eukaryotic ribosomal protein eL21 family. In terms of assembly, component of the large ribosomal subunit (LSU). Mature yeast ribosomes consist of a small (40S) and a large (60S) subunit. The 40S small subunit contains 1 molecule of ribosomal RNA (18S rRNA) and at least 33 different proteins. The large 60S subunit contains 3 rRNA molecules (25S, 5.8S and 5S rRNA) and at least 46 different proteins.

The protein localises to the cytoplasm. Component of the ribosome, a large ribonucleoprotein complex responsible for the synthesis of proteins in the cell. The small ribosomal subunit (SSU) binds messenger RNAs (mRNAs) and translates the encoded message by selecting cognate aminoacyl-transfer RNA (tRNA) molecules. The large subunit (LSU) contains the ribosomal catalytic site termed the peptidyl transferase center (PTC), which catalyzes the formation of peptide bonds, thereby polymerizing the amino acids delivered by tRNAs into a polypeptide chain. The nascent polypeptides leave the ribosome through a tunnel in the LSU and interact with protein factors that function in enzymatic processing, targeting, and the membrane insertion of nascent chains at the exit of the ribosomal tunnel. The polypeptide is Large ribosomal subunit protein eL21B (rpl2102) (Schizosaccharomyces pombe (strain 972 / ATCC 24843) (Fission yeast)).